Reading from the N-terminus, the 651-residue chain is Acetyl-coenzyme A synthetase (651 aa).

CoA contacts are provided by residues 189–192 (RGGK), threonine 311, and asparagine 335. Residues 387 to 389 (GEP), 411 to 416 (DTWWQT), aspartate 500, and arginine 515 each bind ATP. A CoA-binding site is contributed by serine 523. ATP is bound at residue arginine 526. Residues valine 537, histidine 539, and valine 542 each coordinate Mg(2+). Arginine 586 lines the CoA pocket. Lysine 611 bears the N6-acetyllysine mark.

The protein belongs to the ATP-dependent AMP-binding enzyme family. Mg(2+) is required as a cofactor. Acetylated. Deacetylation by the SIR2-homolog deacetylase activates the enzyme.

The enzyme catalyses acetate + ATP + CoA = acetyl-CoA + AMP + diphosphate. Functionally, catalyzes the conversion of acetate into acetyl-CoA (AcCoA), an essential intermediate at the junction of anabolic and catabolic pathways. AcsA undergoes a two-step reaction. In the first half reaction, AcsA combines acetate with ATP to form acetyl-adenylate (AcAMP) intermediate. In the second half reaction, it can then transfer the acetyl group from AcAMP to the sulfhydryl group of CoA, forming the product AcCoA. The polypeptide is Acetyl-coenzyme A synthetase (Brucella anthropi (strain ATCC 49188 / DSM 6882 / CCUG 24695 / JCM 21032 / LMG 3331 / NBRC 15819 / NCTC 12168 / Alc 37) (Ochrobactrum anthropi)).